Reading from the N-terminus, the 926-residue chain is Tyrosine-protein phosphatase non-receptor type 4 (926 aa).

Positions 29-312 constitute an FERM domain; it reads VVCNILLLDN…EHHTFFRLDR (284 aa). Disordered regions lie at residues 379-412, 429-474, and 492-511; these read SDDR…TRVR, SEDF…KKNS, and NESF…GGIP. Polar residues-rich tracts occupy residues 398–408 and 432–455; these read NHRNSSFTQEA and FVSQ…PSQE. S474 bears the Phosphoserine mark. The PDZ domain occupies 517–589; it reads LIKMKPDENG…DQVVLFIKAS (73 aa). The region spanning 655–911 is the Tyrosine-protein phosphatase domain; it reads VLAQFDQLYR…RFVCEAILKV (257 aa). Substrate-binding positions include D820, 852 to 858, and Q896; that span reads CSAGIGR. The active-site Phosphocysteine intermediate is the C852.

Belongs to the protein-tyrosine phosphatase family. Non-receptor class subfamily. As to expression, highly expressed in testis. Specifically expressed in spermatocytes and spermatids within seminiferous tubules (at protein level).

It is found in the cell membrane. The protein resides in the cytoplasm. Its subcellular location is the cytoskeleton. The enzyme catalyses O-phospho-L-tyrosyl-[protein] + H2O = L-tyrosyl-[protein] + phosphate. Functionally, phosphatase that plays a role in immunity, learning, synaptic plasticity or cell homeostasis. Regulates neuronal cell homeostasis by protecting neurons against apoptosis. Negatively regulates TLR4-induced interferon beta production by dephosphorylating adapter TICAM2 and inhibiting subsequent TRAM-TRIF interaction. Dephosphorylates also the immunoreceptor tyrosine-based activation motifs/ITAMs of the TCR zeta subunit and thereby negatively regulates TCR-mediated signaling pathway. May act at junctions between the membrane and the cytoskeleton. This is Tyrosine-protein phosphatase non-receptor type 4 (Ptpn4) from Mus musculus (Mouse).